The following is an 893-amino-acid chain: Flippase kinase 1 (893 aa).

Positions 1–23 are enriched in basic and acidic residues; sequence MAGHHHEHEQERDHEQEHEHDSL. 3 disordered regions span residues 1 to 124, 129 to 148, and 163 to 243; these read MAGH…SSKL, PMTS…PTIP, and QHEH…ERAG. The segment covering 24–42 has biased composition (polar residues); that stretch reads QRPTTGSERTRSISFSKLL. The segment covering 49 to 62 has biased composition (low complexity); it reads NASSSNNMSVSSVN. The span at 76 to 87 shows a compositional bias: polar residues; it reads NNSGSEGQSSRF. Low complexity predominate over residues 96-122; sequence SGNSSKNASAHNSSQSSLEGDSASSSS. Phosphoserine occurs at positions 140, 144, 171, 175, and 185. The segment covering 206-216 has biased composition (low complexity); the sequence is SQNSNNSSSTS. A compositionally biased stretch (polar residues) spans 228–237; the sequence is GSQGFSSNNP. Phosphoserine is present on Ser300. Residues 334 to 355 show a composition bias toward polar residues; it reads DTLNGSPSRGSSKSPTITQTFP. The segment at 334–480 is disordered; the sequence is DTLNGSPSRG…PRRSRRLRTK (147 aa). The span at 370-380 shows a compositional bias: basic and acidic residues; the sequence is NNDKHDEKEEQ. The span at 381–399 shows a compositional bias: polar residues; it reads QTTTDNKTRNLSPTKQNGK. The residue at position 414 (Ser414) is a Phosphoserine. Residues 422-439 are compositionally biased toward low complexity; it reads ASATSPTSSSARKTSGSS. Position 462 is a phosphoserine (Ser462). In terms of domain architecture, Protein kinase spans 496 to 777; it reads FEKIRLLGQG…AADVKKHPFF (282 aa). ATP-binding positions include 502–510 and Lys525; that span reads LGQGDVGKV. Asp621 functions as the Proton acceptor in the catalytic mechanism. The AGC-kinase C-terminal domain maps to 778–861; sequence KKVQWSLLRN…MSLMEQDNNS (84 aa). Residues 874-893 form a disordered region; it reads AYTPNSNRSRSNSHRTFFKR. The segment covering 884–893 has biased composition (basic residues); the sequence is SNSHRTFFKR.

Belongs to the protein kinase superfamily. Ser/Thr protein kinase family. KIN82 subfamily. Post-translationally, the N-terminal non-catalytic domain is phosphorylated by YPK1.

The protein resides in the cytoplasm. The protein localises to the cell membrane. The enzyme catalyses L-seryl-[protein] + ATP = O-phospho-L-seryl-[protein] + ADP + H(+). It carries out the reaction L-threonyl-[protein] + ATP = O-phospho-L-threonyl-[protein] + ADP + H(+). Its activity is regulated as follows. Down-regulated by YKP1 phosphorylation. This effect is counteracted in the presence of mannosyl-inositolphosphorylceramide (MIPC). Functionally, flippase activator that phosphorylates DNF1 and DNF2 and which is involved in the generation of phospholipid asymmetry in membranes by the inward translocation of phospholipids and in the retrieval pathway from early endosomes to the trans-Golgi network (TGN). Also phosphorylates the N-terminal half of YPK1. Involved in pheromone-response. The chain is Flippase kinase 1 (FPK1) from Saccharomyces cerevisiae (strain ATCC 204508 / S288c) (Baker's yeast).